Here is a 294-residue protein sequence, read N- to C-terminus: MTKLIVICGATATGKSGLALNLAMRLGSVILSADSRQVYREFDIGTAKPTLAEQKAVPHYLIDICTPRETMTVADYQEQAQALINSLPVSPLLLVGGTGLYIRSIVQGMKIPRVAPNYELRSQLESLGQTTLYGILQQVDPVAAQKIHPHDPVRTLRAVEVFYVTGIPISAQQGENPPDYPILQIGLDCEMERLSERIHKRTEQMIADGLVGEVEYLCQKYGADLPLLNTLGYQEIKQYLAGEISLEAAKELIVLHTRQFAKRQRTWFRAYPQIEWFNADDADLLDIVWQRIQQ.

Residue 9–16 (GATATGKS) participates in ATP binding. Residue 11-16 (TATGKS) coordinates substrate. Residues 34-37 (DSRQ) form an interaction with substrate tRNA region.

It belongs to the IPP transferase family. As to quaternary structure, monomer. Requires Mg(2+) as cofactor.

The catalysed reaction is adenosine(37) in tRNA + dimethylallyl diphosphate = N(6)-dimethylallyladenosine(37) in tRNA + diphosphate. In terms of biological role, catalyzes the transfer of a dimethylallyl group onto the adenine at position 37 in tRNAs that read codons beginning with uridine, leading to the formation of N6-(dimethylallyl)adenosine (i(6)A). The sequence is that of tRNA dimethylallyltransferase from Trichormus variabilis (strain ATCC 29413 / PCC 7937) (Anabaena variabilis).